A 91-amino-acid chain; its full sequence is UPF0512 protein E (91 aa).

Residues 1 to 25 show a composition bias toward low complexity; the sequence is MAIFKSISSISNSTSAMGSSNSTSN. Residues 1–26 are disordered; it reads MAIFKSISSISNSTSAMGSSNSTSNR.

It belongs to the UPF0512 family.

The protein is UPF0512 protein E of Dictyostelium discoideum (Social amoeba).